Reading from the N-terminus, the 323-residue chain is Sphingolipid delta(4)-desaturase/C4-monooxygenase DES2 (323 aa).

The N-myristoyl glycine moiety is linked to residue Gly-2. A run of 2 helical transmembrane segments spans residues 41 to 61 (PHIK…CWLV) and 68 to 88 (WLLF…TLAI). The Histidine box-1 signature appears at 89-93 (HDISH). The required for C4-hydroxylase activity stretch occupies residues 95 to 99 (TAFGT). The Histidine box-2 motif lies at 128-132 (HVDHH). Residues 210 to 231 (VYLLGSSLLGLGLHPISGHFVA) traverse the membrane as a helical segment. The Histidine box-3 signature appears at 259 to 263 (HMEHH).

It belongs to the fatty acid desaturase type 1 family. DEGS subfamily. As to expression, highly expressed in intestinal crypt cells and adjacent epithelial cells (at protein level).

It is found in the endoplasmic reticulum membrane. The enzyme catalyses a dihydroceramide + 2 Fe(II)-[cytochrome b5] + O2 + 2 H(+) = a phytoceramide + 2 Fe(III)-[cytochrome b5] + H2O. It catalyses the reaction an N-acylsphinganine + 2 Fe(II)-[cytochrome b5] + O2 + 2 H(+) = an N-acylsphing-4-enine + 2 Fe(III)-[cytochrome b5] + 2 H2O. It carries out the reaction an N-acylsphinganine + 2 Fe(II)-[cytochrome b5] + O2 + 2 H(+) = an N-acyl-(4R)-4-hydroxysphinganine + 2 Fe(III)-[cytochrome b5] + H2O. The catalysed reaction is N-octanoylsphinganine + 2 Fe(II)-[cytochrome b5] + O2 + 2 H(+) = N-octanoyl-4-hydroxysphinganine + 2 Fe(III)-[cytochrome b5] + H2O. It participates in membrane lipid metabolism; sphingolipid biosynthesis. Functionally, bifunctional enzyme which acts both as a sphingolipid delta(4)-desaturase and a sphingolipid C4-monooxygenase. The protein is Sphingolipid delta(4)-desaturase/C4-monooxygenase DES2 of Mus musculus (Mouse).